We begin with the raw amino-acid sequence, 438 residues long: UDP-N-acetyl-D-mannosamine dehydrogenase (438 aa).

Residues tyrosine 21, isoleucine 22, aspartate 41, arginine 46, threonine 93, and threonine 131 each contribute to the NAD(+) site. The UDP-N-acetyl-alpha-D-mannosaminouronate site is built by arginine 160, valine 161, lysine 212, asparagine 216, arginine 219, histidine 250, arginine 252, and glycine 263. The Proton donor/acceptor role is filled by lysine 212. Cysteine 266 functions as the Nucleophile in the catalytic mechanism. Residues tyrosine 323 and lysine 324 each contribute to the UDP-N-acetyl-alpha-D-mannosaminouronate site. Position 331 (arginine 331) interacts with NAD(+). A UDP-N-acetyl-alpha-D-mannosaminouronate-binding site is contributed by lysine 409.

It belongs to the UDP-glucose/GDP-mannose dehydrogenase family. As to quaternary structure, homotetramer; probably dimer of dimers.

It carries out the reaction UDP-N-acetyl-alpha-D-mannosamine + 2 NAD(+) + H2O = UDP-N-acetyl-alpha-D-mannosaminouronate + 2 NADH + 3 H(+). Its function is as follows. Catalyzes the four-electron oxidation of UDP-N-acetyl-D-mannosamine (UDP-ManNAc), reducing NAD(+) and releasing UDP-N-acetylmannosaminuronic acid (UDP-ManNAcA). This chain is UDP-N-acetyl-D-mannosamine dehydrogenase (wecC), found in Methanococcus aeolicus (strain ATCC BAA-1280 / DSM 17508 / OCM 812 / Nankai-3).